A 147-amino-acid polypeptide reads, in one-letter code: Large-conductance mechanosensitive channel (147 aa).

The next 2 helical transmembrane spans lie at 8–28 and 81–101; these read FIMK…AAFG and GIFL…FMII.

Belongs to the MscL family. As to quaternary structure, homopentamer.

It localises to the cell inner membrane. Its function is as follows. Channel that opens in response to stretch forces in the membrane lipid bilayer. May participate in the regulation of osmotic pressure changes within the cell. This chain is Large-conductance mechanosensitive channel, found in Trichlorobacter lovleyi (strain ATCC BAA-1151 / DSM 17278 / SZ) (Geobacter lovleyi).